A 463-amino-acid chain; its full sequence is Dihydrolipoyllysine-residue succinyltransferase component of 2-oxoglutarate dehydrogenase complex, mitochondrial (463 aa).

The Lipoyl-binding domain maps to 73 to 148 (STSIEVPPMA…TVGEELAQVE (76 aa)). Lys-114 is modified (N6-lipoyllysine). The disordered stretch occupies residues 144–237 (LAQVEPGEAP…FTPFPRTETR (94 aa)). Residues 148–157 (EPGEAPAEGS) show a composition bias toward low complexity. Residues 184 to 212 (TASKKEAAPKKEAAPKKEVTEPKKADQPK) are compositionally biased toward basic and acidic residues. 3 tandem repeats follow at residues 185-190 (ASKKEA), 191-196 (APKKEA), and 197-202 (APKKEV). Residues 185–209 (ASKKEAAPKKEAAPKKEVTEPKKAD) are 4 X 6 AA approximate tandem repeats of A-[SP]-K-K-E-[AV]. One copy of the 4; approximate repeat lies at 204 to 209 (EPKKAD). Thr-340 is subject to Phosphothreonine. Residues His-435 and Asp-439 contribute to the active site.

This sequence belongs to the 2-oxoacid dehydrogenase family. Component of the 2-oxoglutarate dehydrogenase complex (OGDC), also called alpha-ketoglutarate dehydrogenase (KGDH) complex. The copmplex is composed of the catalytic subunits OGDH (2-oxoglutarate dehydrogenase KGD1; also called E1 subunit), DLST (dihydrolipoamide succinyltransferase KGD2; also called E2 subunit) and DLD (dihydrolipoamide dehydrogenase LPD1; also called E3 subunit), and the assembly factor KGD4. Requires (R)-lipoate as cofactor.

It is found in the mitochondrion. It catalyses the reaction N(6)-[(R)-dihydrolipoyl]-L-lysyl-[protein] + succinyl-CoA = N(6)-[(R)-S(8)-succinyldihydrolipoyl]-L-lysyl-[protein] + CoA. The protein operates within amino-acid degradation; L-lysine degradation via saccharopine pathway; glutaryl-CoA from L-lysine: step 6/6. Its function is as follows. The 2-oxoglutarate dehydrogenase complex catalyzes the overall conversion of 2-oxoglutarate to succinyl-CoA and CO(2). It contains multiple copies of three enzymatic components: 2-oxoglutarate dehydrogenase (E1), dihydrolipoamide succinyltransferase (E2) and lipoamide dehydrogenase (E3). The polypeptide is Dihydrolipoyllysine-residue succinyltransferase component of 2-oxoglutarate dehydrogenase complex, mitochondrial (KGD2) (Saccharomyces cerevisiae (strain ATCC 204508 / S288c) (Baker's yeast)).